A 60-amino-acid chain; its full sequence is Light-harvesting polypeptide B-885 alpha-2 chain (60 aa).

The Cytoplasmic segment spans residues 1–16; that stretch reads SAPAQWKLWLVMDPRT. The chain crosses the membrane as a helical span at residues 17–37; the sequence is VMIGTAAWLGVLALLIHFLLL. Residue H33 participates in a bacteriochlorophyll binding. Residues 38 to 60 are Periplasmic-facing; the sequence is GTERFNWIDTGLKEQKATAAAQA.

The protein belongs to the antenna complex alpha subunit family. As to quaternary structure, the core complex is formed by different alpha and beta chains, binding bacteriochlorophyll molecules, and arranged most probably in tetrameric structures disposed around the reaction center. The non-pigmented gamma chains may constitute additional components.

It localises to the cell inner membrane. Its function is as follows. Antenna complexes are light-harvesting systems, which transfer the excitation energy to the reaction centers. In Rhodocyclus tenuis (Rhodospirillum tenue), this protein is Light-harvesting polypeptide B-885 alpha-2 chain.